A 417-amino-acid chain; its full sequence is Secreted aspartic protease 4 (417 aa).

The N-terminal stretch at 1 to 18 is a signal peptide; it reads MFLQNILSVLAFALLIDA. Residues 19–75 constitute a propeptide, activation peptide; sequence APVKRSTGFVTLDFNVKRSLVDPKDPTVEVKRSPLFLDIEPTEIPVDDTGRNDVGKR. The Peptidase A1 domain maps to 89–403; that stretch reads YSADITIGSN…DLDDRKISMA (315 aa). The active site involves Asp-107. Position 107 to 109 (107 to 109) interacts with pepstatin A; it reads DTG. A disulfide bridge links Cys-122 with Cys-134. Residue Asn-137 is glycosylated (N-linked (GlcNAc...) asparagine). 160 to 161 contacts pepstatin A; the sequence is AD. Residue Asp-267 coordinates Zn(2+). Asp-293 is an active-site residue. 293 to 297 provides a ligand contact to pepstatin A; sequence DSGTT. An intrachain disulfide couples Cys-331 to Cys-369.

Belongs to the peptidase A1 family. In terms of assembly, monomer.

It localises to the secreted. The catalysed reaction is Preferential cleavage at the carboxyl of hydrophobic amino acids, but fails to cleave 15-Leu-|-Tyr-16, 16-Tyr-|-Leu-17 and 24-Phe-|-Phe-25 of insulin B chain. Activates trypsinogen, and degrades keratin.. Its activity is regulated as follows. Activity is inhibited by squash aspartic peptidase inhibitor (SQAPI). In terms of biological role, secreted aspartic peptidases (SAPs) are a group of ten acidic hydrolases considered as key virulence factors. These enzymes supply the fungus with nutrient amino acids as well as are able to degrade the selected host's proteins involved in the immune defense. Moreover, acts toward human hemoglobin though limited proteolysis to generate a variety of antimicrobial hemocidins, enabling to compete with the other microorganisms of the same physiological niche using the microbicidal peptides generated from the host protein. Plays a key role in defense against host by cleaving histatin-5 (Hst 5), a peptide from human saliva that carries out fungicidal activity. The cleavage rate decreases in an order of SAP2 &gt; SAP9 &gt; SAP3 &gt; SAP7 &gt; SAP4 &gt; SAP1 &gt; SAP8. The first cleavage occurs between residues 'Lys-17' and 'His-18' of Hst 5, giving DSHAKRHHGYKRKFHEK and HHSHRGY peptides. Simultaneously, the DSHAKRHHGY and KRKFHEKHHSHRGY peptides are also formed. The sequence is that of Secreted aspartic protease 4 from Candida albicans (strain SC5314 / ATCC MYA-2876) (Yeast).